The chain runs to 348 residues: Aspartate carbamoyltransferase catalytic subunit (348 aa).

Arginine 57 and threonine 58 together coordinate carbamoyl phosphate. Lysine 86 is an L-aspartate binding site. Arginine 107, histidine 135, and glutamine 138 together coordinate carbamoyl phosphate. 2 residues coordinate L-aspartate: arginine 172 and arginine 234. 2 residues coordinate carbamoyl phosphate: leucine 274 and proline 275.

It belongs to the aspartate/ornithine carbamoyltransferase superfamily. ATCase family. Heterododecamer (2C3:3R2) of six catalytic PyrB chains organized as two trimers (C3), and six regulatory PyrI chains organized as three dimers (R2).

It carries out the reaction carbamoyl phosphate + L-aspartate = N-carbamoyl-L-aspartate + phosphate + H(+). Its pathway is pyrimidine metabolism; UMP biosynthesis via de novo pathway; (S)-dihydroorotate from bicarbonate: step 2/3. Catalyzes the condensation of carbamoyl phosphate and aspartate to form carbamoyl aspartate and inorganic phosphate, the committed step in the de novo pyrimidine nucleotide biosynthesis pathway. The protein is Aspartate carbamoyltransferase catalytic subunit of Dichelobacter nodosus (strain VCS1703A).